Here is a 441-residue protein sequence, read N- to C-terminus: Transcription factor bHLH90 (441 aa).

The bHLH domain occupies 260–309; that stretch reads NFKSKNLHSERKRRERINQAMYGLRAVVPKITKLNKIGIFSDAVDYINEL.

As to quaternary structure, homodimer. As to expression, expressed constitutively in roots, leaves, stems, and flowers.

Its subcellular location is the nucleus. This chain is Transcription factor bHLH90 (BHLH90), found in Arabidopsis thaliana (Mouse-ear cress).